The primary structure comprises 89 residues: MVKIRLRRTGKTKQPSYRIVVADSRSPRDGKFIETIGYYLPTRQPKVLEVNADRARYWLGVGAQPTDVVVKLLKRVNILDEQGKVVAES.

It belongs to the bacterial ribosomal protein bS16 family.

This Chloroflexus aggregans (strain MD-66 / DSM 9485) protein is Small ribosomal subunit protein bS16.